A 503-amino-acid chain; its full sequence is Probable cytosol aminopeptidase (503 aa).

Mn(2+) contacts are provided by Lys271 and Asp276. Residue Lys283 is part of the active site. Residues Asp294, Asp353, and Glu355 each contribute to the Mn(2+) site. The active site involves Arg357.

Belongs to the peptidase M17 family. It depends on Mn(2+) as a cofactor.

Its subcellular location is the cytoplasm. It carries out the reaction Release of an N-terminal amino acid, Xaa-|-Yaa-, in which Xaa is preferably Leu, but may be other amino acids including Pro although not Arg or Lys, and Yaa may be Pro. Amino acid amides and methyl esters are also readily hydrolyzed, but rates on arylamides are exceedingly low.. It catalyses the reaction Release of an N-terminal amino acid, preferentially leucine, but not glutamic or aspartic acids.. Its function is as follows. Presumably involved in the processing and regular turnover of intracellular proteins. Catalyzes the removal of unsubstituted N-terminal amino acids from various peptides. The sequence is that of Probable cytosol aminopeptidase from Chlorobium phaeobacteroides (strain DSM 266 / SMG 266 / 2430).